A 247-amino-acid polypeptide reads, in one-letter code: Ribosomal RNA small subunit methyltransferase J (247 aa).

S-adenosyl-L-methionine contacts are provided by residues 106-107, 122-123, and Asp-168; these read RD and ER.

Belongs to the methyltransferase superfamily. RsmJ family.

It is found in the cytoplasm. The catalysed reaction is guanosine(1516) in 16S rRNA + S-adenosyl-L-methionine = N(2)-methylguanosine(1516) in 16S rRNA + S-adenosyl-L-homocysteine + H(+). In terms of biological role, specifically methylates the guanosine in position 1516 of 16S rRNA. In Alcanivorax borkumensis (strain ATCC 700651 / DSM 11573 / NCIMB 13689 / SK2), this protein is Ribosomal RNA small subunit methyltransferase J.